The following is a 639-amino-acid chain: MNKFIAAEAAECIGCHACEIACAVAHNQENWPLSHSDFRPRIHVVGKGQAANPVACHHCNNAPCVTACPVNALTFQSDSVQLDEQKCIGCKRCAIACPFGVVEMVDTIAQKCDLCNQRSSGTQACIEVCPTQALRLMDDKGLQQIKVARQRKTAAGKASSDAQPSRSAALLPVNSRKGADKISASERKTHFGEIYCGLDPQQATYESDRCVYCAEKANCNWHCPLHNAIPDYIRLVQEGKIIEAAELCHQTSSLPEICGRVCPQDRLCEGACTLKDHSGAVSIGNLERYITDTALAMGWRPDVSKVVPRSEKVAVIGAGPAGLGCADILARAGVQVDVFDRHPEIGGMLTFGIPPFKLDKTVLSQRREIFTAMGIDFHLNCEIGRDITFSDLTSEYDAVFIGVGTYGMMRADLPHEDAPGVIQALPFLTAHTRQLMGLPESEEYPLTDVEGKRVVVLGGGDTTMDCLRTSIRLNAASVTCAYRRDEVSMPGSRKEVVNAREEGVEFQFNVQPQYIACDEDGRLTAVGLIRTAMGEPGPDGRRRPRPVAGSEFELPADVLIMAFGFQAHAMPWLQGSGIKLDKWGLIQTGDVGYLPTQTHLKKVFAGGDAVHGADLVVTAMAAGRQAARDMLTLFDTKAS.

5 4Fe-4S ferredoxin-type domains span residues 3–32 (KFIAAEAAECIGCHACEIACAVAHNQENWP), 47–77 (KGQAANPVACHHCNNAPCVTACPVNALTFQS), 78–107 (DSVQLDEQKCIGCKRCAIACPFGVVEMVDT), 110–139 (QKCDLCNQRSSGTQACIEVCPTQALRLMDD), and 201–235 (QQATYESDRCVYCAEKANCNWHCPLHNAIPDYIRL). [4Fe-4S] cluster-binding residues include C12, C15, C18, C22, C56, C59, C64, C68, C87, C90, C93, C97, C112, C115, C125, C129, C210, C213, C219, and C223.

The cofactor is [4Fe-4S] cluster.

Functionally, involved in formate-dependent uric acid degradation under microaerobic and anaerobic conditions. May reduce the enzymes necessary for uric acid degradation. The sequence is that of Putative oxidoreductase UacF from Escherichia coli (strain K12).